Here is a 526-residue protein sequence, read N- to C-terminus: Radial spoke head protein 6 homolog A (526 aa).

Disordered regions lie at residues 180 to 231, 371 to 411, and 469 to 526; these read EGED…EENG, VKSE…DAEI, and PPAP…EEDD. 2 stretches are compositionally biased toward acidic residues: residues 181-212 and 374-395; these read GEDDEAEEGGEEEEKGEVEDDVEEEENEEAED and EEEEDEEEAEEEEKEEENEPEP. Basic and acidic residues predominate over residues 497–506; it reads QALKAAKEEA. Positions 507 to 526 are enriched in acidic residues; it reads EAAAEEMEEEEDEEEEEEDD.

The protein belongs to the flagellar radial spoke RSP4/6 family. Component of sperm axonemal radial spoke complexes.

Its subcellular location is the cytoplasm. The protein resides in the cytoskeleton. It is found in the flagellum axoneme. In terms of biological role, functions as part of radial spoke complexes in the axoneme of sperm flagella that play an important part in motility. The triple radial spokes (RS1, RS2 and RS3) are required to modulate beating of the sperm flagellum. The sequence is that of Radial spoke head protein 6 homolog A (rsph6a) from Xenopus tropicalis (Western clawed frog).